A 519-amino-acid polypeptide reads, in one-letter code: C-glycoside 3-oxidase (519 aa).

Residue glutamate 41 coordinates FAD. A disordered region spans residues 43-93 (GPTVSNPPGAHVKNIEDPERRSHAQRASEGPGAGAETVNSPGAVKSGERRA). Basic and acidic residues predominate over residues 55 to 64 (KNIEDPERRS). FAD contacts are provided by serine 118, asparagine 120, methionine 124, threonine 129, alanine 131, and valine 234. Histidine 440 acts as the Proton acceptor in catalysis. Residues asparagine 474 and threonine 486 each coordinate FAD.

Belongs to the GMC oxidoreductase family. In terms of assembly, monomer. FAD serves as cofactor.

It catalyses the reaction isovitexin + O2 = 3''-dehydroisovitexin + H2O2. The catalysed reaction is isoorientin + O2 = 3''-dehydroisoorientin + H2O2. The enzyme catalyses mangiferin + O2 = 3'-dehydromangiferin + H2O2. Its function is as follows. FAD-dependent C-glycoside-metabolizing enzyme that participates in the degradation of certain C-glycosides by catalyzing the oxidation of the hydroxyl group at the C3 position of the sugar moiety. Shows oxidase activity toward various C-glycosides such as isovitexin, isoorientin and mangiferin but cannot use carminic acid, puerarin, orientin or aloesin. Shows weak activity (100 to 1000-fold lower) with O-glycosides. Probably plays a crucial role in the metabolism of C-glycosides in nature. The chain is C-glycoside 3-oxidase from Arthrobacter globiformis (strain ATCC 8010 / DSM 20124 / JCM 1332 / NBRC 12137 / NCIMB 8907 / NRRL B-2979 / 168).